Here is a 1466-residue protein sequence, read N- to C-terminus: ABC transporter C family member 6 (1466 aa).

The next 10 membrane-spanning stretches (helical) occupy residues Ser-16–Phe-36, Leu-63–Cys-83, Trp-91–Phe-111, Val-128–Tyr-148, Phe-158–Trp-178, Ile-286–Leu-306, Asn-322–Cys-339, Trp-400–Tyr-420, Leu-425–Ala-445, and Ser-512–Leu-532. The 282-residue stretch at Ile-286–Gln-567 folds into the ABC transmembrane type-1 1 domain. Positions Val-601–Ala-824 constitute an ABC transporter 1 domain. Gly-636–Ser-643 serves as a coordination point for ATP. The interval Ala-840–Glu-876 is disordered. The span at Ser-844–Ser-863 shows a compositional bias: basic and acidic residues. 3 helical membrane passes run Tyr-890–Phe-910, Gly-937–Ile-957, and Ile-1026–Pro-1046. In terms of domain architecture, ABC transmembrane type-1 2 spans Ile-900–Asn-1182. The region spanning Ile-1219–Ala-1453 is the ABC transporter 2 domain. Gly-1253–Ser-1260 serves as a coordination point for ATP.

The protein belongs to the ABC transporter superfamily. ABCC family. Conjugate transporter (TC 3.A.1.208) subfamily. As to expression, ubiquitous.

It is found in the membrane. It catalyses the reaction ATP + H2O + xenobioticSide 1 = ADP + phosphate + xenobioticSide 2.. Its function is as follows. Pump for glutathione S-conjugates. This is ABC transporter C family member 6 (ABCC6) from Arabidopsis thaliana (Mouse-ear cress).